The primary structure comprises 103 residues: Urease subunit beta (103 aa).

Belongs to the urease beta subunit family. As to quaternary structure, heterotrimer of UreA (gamma), UreB (beta) and UreC (alpha) subunits. Three heterotrimers associate to form the active enzyme.

The protein resides in the cytoplasm. The catalysed reaction is urea + 2 H2O + H(+) = hydrogencarbonate + 2 NH4(+). It functions in the pathway nitrogen metabolism; urea degradation; CO(2) and NH(3) from urea (urease route): step 1/1. Functionally, ureolysis may allow urea to be employed as a nitrogen source for growth and produces ammonia which may protect from killing at low pH. The polypeptide is Urease subunit beta (Streptococcus salivarius (strain 57.I)).